A 410-amino-acid chain; its full sequence is Dihydrolipoyllysine-residue acetyltransferase component of pyruvate dehydrogenase complex (410 aa).

One can recognise a Lipoyl-binding domain in the interval 1–69; it reads MPDIGTDLVE…TTGSLIAILN (69 aa). K35 bears the N6-lipoyllysine mark. Positions 81 to 100 are disordered; the sequence is SSSYSFKNSKNTSTNSNLGN. Positions 113–150 constitute a Peripheral subunit-binding (PSBD) domain; it reads HATPTVRRLARKFDIKLENITGTGRKGRILKEDVISYK. H383 is an active-site residue.

Belongs to the 2-oxoacid dehydrogenase family. As to quaternary structure, forms a 24-polypeptide structural core with octahedral symmetry. The cofactor is (R)-lipoate.

It catalyses the reaction N(6)-[(R)-dihydrolipoyl]-L-lysyl-[protein] + acetyl-CoA = N(6)-[(R)-S(8)-acetyldihydrolipoyl]-L-lysyl-[protein] + CoA. The pyruvate dehydrogenase complex catalyzes the overall conversion of pyruvate to acetyl-CoA and CO(2). It contains multiple copies of three enzymatic components: pyruvate dehydrogenase (E1), dihydrolipoamide acetyltransferase (E2) and lipoamide dehydrogenase (E3). In Buchnera aphidicola subsp. Baizongia pistaciae (strain Bp), this protein is Dihydrolipoyllysine-residue acetyltransferase component of pyruvate dehydrogenase complex (aceF).